A 523-amino-acid chain; its full sequence is 11-oxo-beta-amyrin 30-oxidase (523 aa).

Residues 9 to 29 (AIWVVLTVILAAIPIWVCHMV) form a helical membrane-spanning segment. Position 471 (Cys471) interacts with heme.

The protein belongs to the cytochrome P450 family. Heme serves as cofactor. As to expression, expressed in roots, stolons and stems. Not detected in leaves.

The protein localises to the membrane. The catalysed reaction is 11-oxo-beta-amyrin + 3 reduced [NADPH--hemoprotein reductase] + 3 O2 = glycyrrhetinate + 3 oxidized [NADPH--hemoprotein reductase] + 4 H2O + 4 H(+). It carries out the reaction 11-oxo-beta-amyrin + reduced [NADPH--hemoprotein reductase] + O2 = 30-hydroxy-11-oxo-beta-amyrin + oxidized [NADPH--hemoprotein reductase] + H2O + H(+). It catalyses the reaction 30-hydroxy-11-oxo-beta-amyrin + reduced [NADPH--hemoprotein reductase] + O2 = glycyrrhetaldehyde + oxidized [NADPH--hemoprotein reductase] + 2 H2O + H(+). The enzyme catalyses glycyrrhetaldehyde + reduced [NADPH--hemoprotein reductase] + O2 = glycyrrhetinate + oxidized [NADPH--hemoprotein reductase] + H2O + 2 H(+). Its function is as follows. Involved in the biosynthesis of Glycyrrhetinic acid (GA), a natural product which exhibits anti-inflammatory activity. Involved in the biosynthesis of the triterpenoid saponin glycyrrhizin. Catalyzes three sequential oxidation steps at C-30 of 11-oxo-beta-amyrin. Also able to catalyze C-30 monohydroxylation of beta-amyrin to produce 30-hydroxy-beta-amyrin. May be also responsible for the oxidation at positions C-22 and C-29 in addition to C-30. The polypeptide is 11-oxo-beta-amyrin 30-oxidase (Glycyrrhiza uralensis (Chinese licorice)).